Consider the following 188-residue polypeptide: Ribosomal RNA small subunit methyltransferase G (188 aa).

S-adenosyl-L-methionine-binding positions include Gly-69, Phe-74, 119-120 (VQ), and Arg-134.

Belongs to the methyltransferase superfamily. RNA methyltransferase RsmG family.

It is found in the cytoplasm. It catalyses the reaction guanosine(527) in 16S rRNA + S-adenosyl-L-methionine = N(7)-methylguanosine(527) in 16S rRNA + S-adenosyl-L-homocysteine. Its function is as follows. Specifically methylates the N7 position of guanine in position 527 of 16S rRNA. In Campylobacter jejuni (strain RM1221), this protein is Ribosomal RNA small subunit methyltransferase G.